A 692-amino-acid chain; its full sequence is Structure-specific endonuclease subunit SLX4 (692 aa).

Residues 39–59 are disordered; that stretch reads SDDEDQDEEQETEIPPEEGDD.

This sequence belongs to the SLX4 family. As to quaternary structure, forms a heterodimer with SLX1. Phosphorylated in response to DNA damage.

It localises to the nucleus. Regulatory subunit of the SLX1-SLX4 structure-specific endonuclease that resolves DNA secondary structures generated during DNA repair and recombination. Has endonuclease activity towards branched DNA substrates, introducing single-strand cuts in duplex DNA close to junctions with ss-DNA. The chain is Structure-specific endonuclease subunit SLX4 from Kluyveromyces lactis (strain ATCC 8585 / CBS 2359 / DSM 70799 / NBRC 1267 / NRRL Y-1140 / WM37) (Yeast).